Reading from the N-terminus, the 402-residue chain is Multidrug resistance protein MdtH (402 aa).

At 1–12 (MSRVSQARNLGK) the chain is on the cytoplasmic side. Residues 13–33 (YFLLIDNMLVVLGFFVVFPLI) form a helical membrane-spanning segment. At 34–98 (SIRFVDQMGW…GFATMGIAHE (65 aa)) the chain is on the periplasmic side. Residues 99–116 (PWLLWFSCLLSGLGGTLF) traverse the membrane as a helical segment. At 117 to 138 (DPPRSALVVKLIRPQQRGRFFS) the chain is on the cytoplasmic side. The helical transmembrane segment at 139-159 (LLMMQDSAGAVIGALLGSWLL) threads the bilayer. The Periplasmic portion of the chain corresponds to 160–164 (QYDFR). A helical membrane pass occupies residues 165–185 (LVCATGAVLFVLCAAFNAWLL). Residues 186-213 (PAWKLSTVRTPVREGMTRVMRDKRFVTY) lie on the Cytoplasmic side of the membrane. Residues 214-234 (VLTLAGYYMLAVQVMLMLPIM) traverse the membrane as a helical segment. Residues 235–243 (VNDVAGAPS) lie on the Periplasmic side of the membrane. Residues 244–264 (AVKWMYAIEACLSLTLLYPIA) traverse the membrane as a helical segment. The Cytoplasmic portion of the chain corresponds to 265–276 (RWSEKHFRLEHR). The chain crosses the membrane as a helical span at residues 277 to 297 (LMAGLLIMSLSMMPVGMVSGL). Residues 298-299 (QQ) lie on the Periplasmic side of the membrane. Residues 300–320 (LFTLICLFYIGSIIAEPARET) traverse the membrane as a helical segment. Topologically, residues 321–339 (LSASLADARARGSYMGCSR) are cytoplasmic. The chain crosses the membrane as a helical span at residues 340-360 (LGLAIGGAIGYIGGGWLFDLG). Residues 361–367 (KSAHQPE) lie on the Periplasmic side of the membrane. Residues 368–388 (LPWMMLGIIGIFTFLALGWQF) form a helical membrane-spanning segment. Topologically, residues 389–402 (SQKRAARRLLERDA) are cytoplasmic.

The protein belongs to the major facilitator superfamily. DHA1 family. MdtH (TC 2.A.1.2.21) subfamily.

It localises to the cell inner membrane. Confers resistance to norfloxacin and enoxacin. In Escherichia coli (strain SE11), this protein is Multidrug resistance protein MdtH.